Here is a 578-residue protein sequence, read N- to C-terminus: Rhamnogalacturonate lyase (578 aa).

Residues 1 to 27 form the signal peptide; that stretch reads MHMNKPLQAWRTPLLTLIFVLPLTATG.

This sequence belongs to the polysaccharide lyase 4 family.

The protein resides in the secreted. It carries out the reaction Endotype eliminative cleavage of L-alpha-rhamnopyranosyl-(1-&gt;4)-alpha-D-galactopyranosyluronic acid bonds of rhamnogalacturonan I domains in ramified hairy regions of pectin leaving L-rhamnopyranose at the reducing end and 4-deoxy-4,5-unsaturated D-galactopyranosyluronic acid at the non-reducing end.. In terms of biological role, degrades the rhamnogalacturonan I (RG-I) backbone of pectin. Is required for the full virulence of E.chrysanthemi strain 3937 as it is involved in rotting of plant tissue. The protein is Rhamnogalacturonate lyase (rhiE) of Dickeya dadantii (strain 3937) (Erwinia chrysanthemi (strain 3937)).